The chain runs to 1239 residues: MDPFTQHMLEKAEQRSRALGISNASKFPLVECSVPSSSATSASGGDAGVLAPRSRSPGGQSAASGGGKVVTLGKATLEASPAKPLRHYTAVNKENLDMGIEINITTDKPIGVQVEIQEQEVTDDEEQAEGGALNPLLEAEPVNQPLARLRDTSRSRLQRMGALYSNTDDLSSPIHRTEGQFHVTTGEEEDCGNRSSRQPKQRLGKLAALADTINQWEDDTSHHEVHRLLEAPPPKPHLSSRRAEKGPAPLPPKKDEVDEASRTKQLKWDPKVLSSLEAQGFQRRESSTIKHTYDYAKQEEAAPASKVEDAVLTAKPPVPQKSTTVSQVAKNFASSAPAPKPAPAPAVSVKSGLVSGRAALFENKGTGGQSQGLRNQKDPCELSLKERMKLFETGNNKAMLPMAPIGSAPSITQIRAEEVKQHLAAMHPVTAAAATTVVAATKPKQENKLRDKVAALVANAQSSAETRIKDIDRQRQEDMQIISNRFNKQKELFDNQPSDSSVAAQARPPAPAPSRVVRPMPPPPPPPIAALSPGLASSKRRSPGDAPTTDEDSKRARKSHSDRLYPALSDLDSSGDNCCAAETASATDDSHQQDEEETESCMDESDDQSQTEDSSAGMCNGSLGREIMSAVQRNEVEMQQQQTGKKTVRYADQDMYYDDSSLNSSQVSAGIDDYLDEALVEDYGSTQDDQSDSGDEQNASRLSLGSKGTTASNSFSFRKNPASICTPIEEHHEMEMDLQTPLLSGAQPVKSELSVNQDNDNLVTLVHTVSFYRRQQSANSSNSTPVRKICREQQVMRSALAGDCHAKHRLEYDSPQQSDYVAAATDIADQTDEDDEEMQNAREVNDASQAQDKIKKLLSEVCKQQQVIGQASQALNLCAATVEFSGSTESVEGERYLLLATHRRQACLDEVQRLRVENSIRPVGAPKEKGLLTVKDITIPLRQEYVRKMASNNINGHHLVCLLKYNEHVLATKTVPTMPGLLSVKFPDVLQLNNVYADFRITLEIYGMLAQRDQLPHELKYHINLNKKGGIKTPKKKGGENRLVMPPVQSPAGPHVVRTPQLVQYGFAIFSLREIQRTTWTLTQVLGVSPLEGVVHMKVNCELSVSVEYKGFLTMFEDISGFGAWHRRWCYLNGSVINYWKYPDDEKRKTPMGSIDLNSCTSQKVTTAPRDICARLNTMLLECERPALETDQESLIIVPNGRTTTVRHLLSADTKEEREEWCAYLNKALTLLRAWGTTH.

Disordered stretches follow at residues 32–67 (CSVP…SGGG), 230–265 (EAPP…RTKQ), 493–621 (FDNQ…MCNG), and 684–716 (GSTQ…NSFS). The span at 53–63 (RSRSPGGQSAA) shows a compositional bias: low complexity. The segment at 126–371 (EQAEGGALNP…ENKGTGGQSQ (246 aa)) is interaction with and bundling of F-actin. Residues 252-265 (PKKDEVDEASRTKQ) show a composition bias toward basic and acidic residues. The segment covering 500–518 (SSVAAQARPPAPAPSRVVR) has biased composition (low complexity). Over residues 519–528 (PMPPPPPPPI) the composition is skewed to pro residues. The segment covering 551-563 (EDSKRARKSHSDR) has biased composition (basic and acidic residues). Positions 594-610 (DEEETESCMDESDDQSQ) are enriched in acidic residues. The span at 699 to 716 (ASRLSLGSKGTTASNSFS) shows a compositional bias: polar residues. At S712 the chain carries Phosphoserine. At T740 the chain carries Phosphothreonine. 2 positions are modified to phosphoserine: S744 and S754. T831 carries the post-translational modification Phosphothreonine. The stretch at 834 to 861 (DDEEMQNAREVNDASQAQDKIKKLLSEV) forms a coiled coil. The 125-residue stretch at 1106-1230 (SVEYKGFLTM…WCAYLNKALT (125 aa)) folds into the PH domain.

As to quaternary structure, interacts with and bundles F-actin. As to expression, accumulates in the ring canals that interconnect cells of the germline cysts in males and the ovarian follicles in females. These structures develop from arrested contractile rings after a specialized cytokinesis in which the closing of the invaginating plasma membrane is incomplete. Also concentrates in the arrested cleavage furrows that initially link the oocyte to its 15 nurse cells in the early egg chamber and is subsequently lost from these furrows as germline cell division is completed.

The protein localises to the nucleus. It localises to the cytoplasm. It is found in the cytoskeleton. The protein resides in the cell cortex. Its subcellular location is the cell projection. The protein localises to the cilium. It localises to the flagellum. Required for cytokinesis. Essential for the structural integrity of the cleavage furrow and for completion of cleavage furrow ingression and proper formation of the midbody. Required during cellularization of syncytial embryos for the proper formation and function of the furrow canals, the stable inward folds of the plasma membrane which separate the peripheral nuclei. Also required for the formation of the pole cells, the progenitors of the adult germline which are formed by cytokinesis of the cytoplasmic buds at the posterior pole of the syncytial embryo. Essential for embryonic viability. This chain is Anillin (scra), found in Drosophila melanogaster (Fruit fly).